The sequence spans 697 residues: MMRPVVVKEKRVNESHIHAVEDEVRQAKTMDRDIVKHAMKQSVAKLNPKVMIKNPIMFVVEIGFVITFILSFLPSHSSSIPGWFNITVSLILLFTVLFANFAEALAEGRGKAQADSLKQSKKDVFANVVKENGEIVQVSATDLRKDDVVIVKQGEMIPSDGEVIKGLASVDESAITGESAPVIKEAGGDFCSVTGGTMVVSDEITIVITSNPGKSFIDKMISLVEGAARQKTPNEIALNTVLTSLTLIFLIVVVTLPIFTNYLGFQIDTAVLVALLVCLIPTTIGGLLSAIGIAGMDRVTKFNVLAMSGKAVEAAGDINTIILDKTGTITFGNRMAHTLLPVGNETIEQVGKWAAISSVLDETPEGRSVIEYVQAKSISYNRELAEQGEFIPFKAETRMSGVDLQDGMKVRKGAVGSVIEWVRSQGGTIPKDVNQKADFISKEGGTPLVVAVDNRIYGLIYLKDTVKPGMRERFEQLRQMGIKTVMCTGDNPLTAATIAKEAGVDEFVAECKPEDKIAVIKAEQDKGKLVAMTGDGTNDAPALAQADVGLAMNSGTTAAKEAANMIDLDSNPTKIIEVVGIGKQLLMTRGALTTFSIANDIAKYFAIIPAMFTLAIPQMEALNIMKLTSPLSAILSALLFNAVIIPLLIPLAMKGIAYKPMSSNALLGRNLLIYGLGGVIVPFIGIKVIDIIVGLFI.

The next 4 membrane-spanning stretches (helical) occupy residues 55-75 (PIMFVVEIGFVITFILSFLPS), 79-99 (SIPGWFNITVSLILLFTVLFA), 245-265 (LTLIFLIVVVTLPIFTNYLGF), and 271-291 (VLVALLVCLIPTTIGGLLSAI). The active-site 4-aspartylphosphate intermediate is the Asp-324. ATP contacts are provided by residues Asp-361, Glu-365, 393–400 (FKAETRMS), and Lys-412. Mg(2+)-binding residues include Asp-535 and Asp-539. Helical transmembrane passes span 605 to 625 (FAIIPAMFTLAIPQMEALNIM), 633 to 653 (AILSALLFNAVIIPLLIPLAM), and 677 to 697 (GGVIVPFIGIKVIDIIVGLFI).

Belongs to the cation transport ATPase (P-type) (TC 3.A.3) family. Type IA subfamily. The system is composed of three essential subunits: KdpA, KdpB and KdpC.

Its subcellular location is the cell membrane. It carries out the reaction K(+)(out) + ATP + H2O = K(+)(in) + ADP + phosphate + H(+). Functionally, part of the high-affinity ATP-driven potassium transport (or Kdp) system, which catalyzes the hydrolysis of ATP coupled with the electrogenic transport of potassium into the cytoplasm. This subunit is responsible for energy coupling to the transport system and for the release of the potassium ions to the cytoplasm. This chain is Potassium-transporting ATPase ATP-binding subunit, found in Bacillus anthracis (strain CDC 684 / NRRL 3495).